The sequence spans 373 residues: Cystathionine gamma-synthase/O-acetylhomoserine (thiol)-lyase (373 aa).

K197 carries the N6-(pyridoxal phosphate)lysine modification.

This sequence belongs to the trans-sulfuration enzymes family. Homotetramer. Pyridoxal 5'-phosphate is required as a cofactor.

Its subcellular location is the cytoplasm. It catalyses the reaction O-acetyl-L-homoserine + L-cysteine = L,L-cystathionine + acetate + H(+). The enzyme catalyses O-acetyl-L-homoserine + hydrogen sulfide = L-homocysteine + acetate. It participates in amino-acid biosynthesis; L-methionine biosynthesis via de novo pathway. Functionally, catalyzes the formation of L-cystathionine from O-acetyl-L-homoserine and L-cysteine. Cannot use O-succinyl-L-homoserine as substrate. Also exhibits O-acetylhomoserine thiolyase activity, catalyzing the synthesis of L-homocysteine from O-acetyl-L-homoserine and sulfide. In Bacillus subtilis (strain 168), this protein is Cystathionine gamma-synthase/O-acetylhomoserine (thiol)-lyase (metI).